The following is an 814-amino-acid chain: G-type lectin S-receptor-like serine/threonine-protein kinase At1g61370 (814 aa).

A signal peptide spans 1–25 (MGKIGIVFFASLLFLLIIFPSCAFA). The Bulb-type lectin domain occupies 26 to 145 (AITRASPLSI…VSERNLWESF (120 aa)). At 26–433 (AITRASPLSI…SELAGSNRVK (408 aa)) the chain is on the extracellular side. Residues asparagine 43, asparagine 54, asparagine 89, asparagine 95, asparagine 253, and asparagine 271 are each glycosylated (N-linked (GlcNAc...) asparagine). The EGF-like domain occupies 282–318 (PVSSCDVYNTCGPFGLCIRSNPPKCECLKGFVPKSDE). 2 disulfides stabilise this stretch: cysteine 286–cysteine 298 and cysteine 292–cysteine 306. Residues asparagine 324, asparagine 334, asparagine 340, and asparagine 383 are each glycosylated (N-linked (GlcNAc...) asparagine). One can recognise a PAN domain in the interval 337 to 423 (CDVNSSATAQ…GETLSIRLAS (87 aa)). 2 disulfide bridges follow: cysteine 376-cysteine 397 and cysteine 380-cysteine 386. The helical transmembrane segment at 434–454 (IIVASIVSISVFMILVFASYW) threads the bilayer. At 455-814 (YWRYKAKQND…NITQTAIVGR (360 aa)) the chain is on the cytoplasmic side. The Protein kinase domain occupies 501-786 (FSMENKLGQG…DLPKPKQPVF (286 aa)). Residues 507 to 515 (LGQGGFGPV) and lysine 529 contribute to the ATP site. Residues serine 535 and serine 550 each carry the phosphoserine modification. Residues 590-607 (TKKLELDWPKRFEIIQGI) form a caM-binding region. Aspartate 626 (proton acceptor) is an active-site residue. Residues serine 630 and serine 643 each carry the phosphoserine modification. Threonine 660 bears the Phosphothreonine mark. Phosphoserine occurs at positions 703, 704, 797, and 802. Threonine 809 bears the Phosphothreonine mark.

The protein belongs to the protein kinase superfamily. Ser/Thr protein kinase family.

The protein localises to the cell membrane. The catalysed reaction is L-seryl-[protein] + ATP = O-phospho-L-seryl-[protein] + ADP + H(+). The enzyme catalyses L-threonyl-[protein] + ATP = O-phospho-L-threonyl-[protein] + ADP + H(+). The protein is G-type lectin S-receptor-like serine/threonine-protein kinase At1g61370 of Arabidopsis thaliana (Mouse-ear cress).